The primary structure comprises 210 residues: Orotate phosphoribosyltransferase (210 aa).

Residues Arg-96, Lys-100, His-102, and 122-130 (DDLISTGGS) contribute to the 5-phospho-alpha-D-ribose 1-diphosphate site. Position 126 (Ser-126) interacts with orotate.

Belongs to the purine/pyrimidine phosphoribosyltransferase family. PyrE subfamily. As to quaternary structure, homodimer. The cofactor is Mg(2+).

The catalysed reaction is orotidine 5'-phosphate + diphosphate = orotate + 5-phospho-alpha-D-ribose 1-diphosphate. Its pathway is pyrimidine metabolism; UMP biosynthesis via de novo pathway; UMP from orotate: step 1/2. Functionally, catalyzes the transfer of a ribosyl phosphate group from 5-phosphoribose 1-diphosphate to orotate, leading to the formation of orotidine monophosphate (OMP). This Levilactobacillus brevis (strain ATCC 367 / BCRC 12310 / CIP 105137 / JCM 1170 / LMG 11437 / NCIMB 947 / NCTC 947) (Lactobacillus brevis) protein is Orotate phosphoribosyltransferase.